Consider the following 581-residue polypeptide: MPKPINVRVTTMDAELEFAIQPNTTGKQLFDQVVKTIGLREVWYFGLQYVDNKGFPTWLKLDKKVSAQEVRKESPLQFKFRAKFYPEDVAEELIQDITQKLFFLQVKEGILSDEIYCPPETAVLLGSYAVQAKFGDYNKELHKAGYLGSERLIPQRVMDQHKLTRDQWEDRIQVWHAEHRGMLKDSAMLEYLKIAQDLEMYGINYFEIKNKKGTDLWLGVDALGLNIYEKDDKLTPKIGFPWSEIRNISFNDKKFVIKPIDKKAPDFVFYAPRLRINKRILQLCMGNHELYMRRRKPDTIEVQQMKAQAREEKHQKQLERQQLETEKKRRETVEREKEQMMREKEELMLRLQDYEEKTRKAEKELSDQIQRALKLEEERKRAQEEAGRLEADRLAALRAKEELERQAADQIKSQEQLATELAEYTAKIALLEEARRRKENEVEEWQLRAKEAQDDLVKTREELHLVMTAPPPPPVYEPVNYHVHEGPQEEGTELSAELSSEGILDDRNEEKRITEAEKNERVQRQLMTLTSELSQARDENKRTHNDIIHNENMRQGRDKYKTLRQIRQGNTKQRIDEFEAM.

Residues 2–295 form the FERM domain; that stretch reads PKPINVRVTT…GNHELYMRRR (294 aa). Lysine 60 carries the N6-acetyllysine modification. The short motif at 115-120 is the [IL]-x-C-x-x-[DE] motif element; the sequence is IYCPPE. A Phosphotyrosine; by PDGFR modification is found at tyrosine 146. The tract at residues 244–581 is interaction with SCYL3; it reads EIRNISFNDK…KQRIDEFEAM (338 aa). Positions 302–462 form a coiled coil; the sequence is VQQMKAQARE…QDDLVKTREE (161 aa). A disordered region spans residues 306–341; it reads KAQAREEKHQKQLERQQLETEKKRRETVEREKEQMM. The segment covering 308–341 has biased composition (basic and acidic residues); that stretch reads QAREEKHQKQLERQQLETEKKRRETVEREKEQMM. At tyrosine 354 the chain carries Phosphotyrosine; by PDGFR. Serine 366 bears the Phosphoserine mark. Tyrosine 476 is modified (phosphotyrosine). The segment at 534-560 is disordered; it reads SQARDENKRTHNDIIHNENMRQGRDKY. The segment covering 535 to 560 has biased composition (basic and acidic residues); the sequence is QARDENKRTHNDIIHNENMRQGRDKY. A Phosphothreonine; by ROCK2 and PKC/PRKCI modification is found at threonine 562.

Interacts with PALS1 and NHERF2. Found in a complex with EZR, PODXL and NHERF2. Interacts with MCC, PLEKHG6, PODXL, SCYL3/PACE1, NHERF1 and TMEM8B. Interacts (when phosphorylated) with FES/FPS. Interacts with dimeric S100P, the interaction may be activating through unmasking of F-actin binding sites. Identified in complexes that contain VIM, EZR, AHNAK, BFSP1, BFSP2, ANK2, PLEC, PRX and spectrin. Detected in a complex composed of at least EZR, AHNAK, PPL and PRX. Interacts with PDPN (via cytoplasmic domain); activates RHOA and promotes epithelial-mesenchymal transition. Interacts with SPN/CD43 cytoplasmic tail, CD44 and ICAM2. Interacts with SLC9A3; interaction targets SLC9A3 to the apical membrane. Interacts with SLC9A1; regulates interactions of SLC9A1 with cytoskeletal and promotes stress fiber formation. Interacts with CLIC5; may work together in a complex which also includes RDX and MYO6 to stabilize linkages between the plasma membrane and subjacent actin cytoskeleton at the base of stereocilia. Phosphorylated by tyrosine-protein kinases. Phosphorylation by ROCK2 suppresses the head-to-tail association of the N-terminal and C-terminal halves resulting in an opened conformation which is capable of actin and membrane-binding. In terms of processing, S-nitrosylation is induced by interferon-gamma and oxidatively-modified low-densitity lipoprotein (LDL(ox)) possibly implicating the iNOS-S100A8/9 transnitrosylase complex. As to expression, detected in eye lens fiber cells (at protein level).

It localises to the apical cell membrane. Its subcellular location is the cell projection. The protein resides in the microvillus membrane. It is found in the ruffle membrane. The protein localises to the cytoplasm. It localises to the cell cortex. Its subcellular location is the cytoskeleton. The protein resides in the microvillus. Its activity is regulated as follows. A head-to-tail association, of the N-terminal and C-terminal halves results in a closed conformation (inactive form) which is incapable of actin or membrane-binding. In terms of biological role, probably involved in connections of major cytoskeletal structures to the plasma membrane. In epithelial cells, required for the formation of microvilli and membrane ruffles on the apical pole. Along with PLEKHG6, required for normal macropinocytosis. This chain is Ezrin (EZR), found in Bos taurus (Bovine).